A 357-amino-acid chain; its full sequence is MDLPVNLTSFSLSTPSPLETNHSLGKDDLRPSSPLLSVFGVLILTLLGFLVAATFAWNLLVLATILRVRTFHRVPHNLVASMAVSDVLVAALVMPLSLVHELSGRRWQLGRRLCQLWIACDVLCCTASIWNVTAIALDRYWSITRHMEYTLRTRKCVSNVMIALTWALSAVISLAPLLFGWGETYSEGSEECQVSREPSYAVFSTVGAFYLPLCVVLFVYWKIYKAAKFRVGSRKTNSVSPISEAVEVKDSAKQPQMVFTVRHATVTFQPEGDTWREQKEQRAALMVGILIGVFVLCWIPFFLTELISPLCSCDIPAIWKSIFLWLGYSNSFFNPLIYTAFNKNYNSAFKNFFSRQH.

The Extracellular portion of the chain corresponds to Met1 to Leu36. Residues Asn6 and Asn21 are each glycosylated (N-linked (GlcNAc...) asparagine). The helical transmembrane segment at Ser37–Ala63 threads the bilayer. Topologically, residues Thr64–His76 are cytoplasmic. A helical transmembrane segment spans residues Asn77 to Ser103. Topologically, residues Gly104–Cys114 are extracellular. Cys114 and Cys192 form a disulfide bridge. A helical membrane pass occupies residues Gln115–Leu137. Asp121 is a binding site for serotonin. The Cytoplasmic portion of the chain corresponds to Asp138 to Lys155. A helical membrane pass occupies residues Cys156–Pro176. Residues Leu177–Pro198 lie on the Extracellular side of the membrane. Residues Ser199–Tyr220 form a helical membrane-spanning segment. The Cytoplasmic portion of the chain corresponds to Trp221 to Val287. Residues Gly288–Ser312 form a helical membrane-spanning segment. At Cys313–Asp314 the chain is on the extracellular side. Residues Ile315 to Thr339 form a helical membrane-spanning segment. At Ala340 to His357 the chain is on the cytoplasmic side.

It belongs to the G-protein coupled receptor 1 family.

It localises to the cell membrane. Its function is as follows. G-protein coupled receptor for 5-hydroxytryptamine (serotonin), a biogenic hormone that functions as a neurotransmitter, a hormone and a mitogen. Also functions as a receptor for ergot alkaloid derivatives and other psychoactive substances. Ligand binding causes a conformation change that triggers signaling via guanine nucleotide-binding proteins (G proteins) and modulates the activity of downstream effectors. HTR5A is coupled to G(i)/G(o) G alpha proteins and mediates inhibitory neurotransmission: signaling inhibits adenylate cyclase activity and activates a phosphatidylinositol-calcium second messenger system that regulates the release of Ca(2+) ions from intracellular stores. This Homo sapiens (Human) protein is 5-hydroxytryptamine receptor 5A.